Here is a 161-residue protein sequence, read N- to C-terminus: MELNKNYLTQEGFKQLEKELENLIQVKRPEIIRLLQEARDQGDLSENADYDAAKAQQGEIETRIAEIQDILANAKLISDHQAKTKVTKVSLGSTVEIYDYSSKSNEKYTIVGTLEANPEEHKISNESPLALAIYGRLIGDECDVVGIEVPYRVKILKISNR.

A coiled-coil region spans residues 8-28; that stretch reads LTQEGFKQLEKELENLIQVKR.

It belongs to the GreA/GreB family.

Its function is as follows. Necessary for efficient RNA polymerase transcription elongation past template-encoded arresting sites. The arresting sites in DNA have the property of trapping a certain fraction of elongating RNA polymerases that pass through, resulting in locked ternary complexes. Cleavage of the nascent transcript by cleavage factors such as GreA or GreB allows the resumption of elongation from the new 3'terminus. GreA releases sequences of 2 to 3 nucleotides. The sequence is that of Transcription elongation factor GreA from Mycoplasma genitalium (strain ATCC 33530 / DSM 19775 / NCTC 10195 / G37) (Mycoplasmoides genitalium).